Reading from the N-terminus, the 437-residue chain is Acyl-coenzyme A thioesterase 2, chloroplastic (437 aa).

The N-terminal 13 residues, 1–13 (MDLSSSPNHPITV), are a transit peptide targeting the chloroplast. HotDog ACOT-type domains lie at 89 to 211 (ILYN…RDSK) and 287 to 404 (RDTR…RPEA).

Belongs to the acyl coenzyme A hydrolase family. In terms of tissue distribution, mostly expressed at low levels in glandular trichomes (lupulin glands), and, to a lower extent, in stems, leaves, flowers and cones.

The protein localises to the plastid. It localises to the chloroplast. Its function is as follows. Acyl-CoA thioesterases are a group of enzymes that catalyze the hydrolysis of acyl-CoAs to the free fatty acid and coenzyme A (CoASH), providing the potential to regulate intracellular levels of acyl-CoAs, free fatty acids and CoASH. In Humulus lupulus (European hop), this protein is Acyl-coenzyme A thioesterase 2, chloroplastic.